The sequence spans 241 residues: Probable septum site-determining protein MinC (241 aa).

This sequence belongs to the MinC family. Interacts with MinD and FtsZ.

Functionally, cell division inhibitor that blocks the formation of polar Z ring septums. Rapidly oscillates between the poles of the cell to destabilize FtsZ filaments that have formed before they mature into polar Z rings. Prevents FtsZ polymerization. This chain is Probable septum site-determining protein MinC, found in Rhizobium rhizogenes (strain K84 / ATCC BAA-868) (Agrobacterium radiobacter).